The following is a 343-amino-acid chain: MLDIKRKQDHIEINLTKNVESGLSSGFESVQFVHNALPEINYSSIDTTTTFLNKILQAPILISSMTGGTPRARDINCRLAAAAQKAGIAMGLGSMRTLLTEPSTLDTFTVRNNAPDIVLLANIGAVQLNYGVTPKQCQYLVDSVKADALILHLNVLQELTQPEGDKNWENLLPKIKEVVNYLSVPVIIKEVGFGLSKKTAKQFIDIGVKILDVAGSGGTSWSQVEAYRATNSLQNRIASSFINWGIPTLDSLKMVREASKDISVIASGGLKSGIDGAKAIRMGADIFGLAGPFLKAADVSENLVSEEIQLIIEQLKITMMCTGSHTINNLKKAELRMNHIPLY.

6 to 7 (RK) provides a ligand contact to substrate. FMN is bound by residues serine 63, 64–66 (SMT), serine 94, and asparagine 122. 94–96 (SMR) lines the substrate pocket. Glutamine 157 contributes to the substrate binding site. Glutamate 158 is a Mg(2+) binding site. Residues lysine 189, threonine 219, 269–271 (GLK), and 290–291 (AG) contribute to the FMN site.

It belongs to the IPP isomerase type 2 family. In terms of assembly, homooctamer. Dimer of tetramers. FMN serves as cofactor. NADPH is required as a cofactor. Requires Mg(2+) as cofactor.

It localises to the cytoplasm. It carries out the reaction isopentenyl diphosphate = dimethylallyl diphosphate. Its function is as follows. Involved in the biosynthesis of isoprenoids. Catalyzes the 1,3-allylic rearrangement of the homoallylic substrate isopentenyl (IPP) to its allylic isomer, dimethylallyl diphosphate (DMAPP). This chain is Isopentenyl-diphosphate delta-isomerase, found in Rickettsia bellii (strain OSU 85-389).